A 548-amino-acid chain; its full sequence is Chaperonin GroEL (548 aa).

Residues 29–32, Lys-50, 86–90, Gly-414, and Asp-493 each bind ATP; these read THGP and DGTTT.

Belongs to the chaperonin (HSP60) family. In terms of assembly, forms a cylinder of 14 subunits composed of two heptameric rings stacked back-to-back. Interacts with the co-chaperonin GroES.

It localises to the cytoplasm. The enzyme catalyses ATP + H2O + a folded polypeptide = ADP + phosphate + an unfolded polypeptide.. Functionally, together with its co-chaperonin GroES, plays an essential role in assisting protein folding. The GroEL-GroES system forms a nano-cage that allows encapsulation of the non-native substrate proteins and provides a physical environment optimized to promote and accelerate protein folding. This chain is Chaperonin GroEL, found in Desulfatibacillum aliphaticivorans.